Here is a 289-residue protein sequence, read N- to C-terminus: Glycine--tRNA ligase alpha subunit (289 aa).

Belongs to the class-II aminoacyl-tRNA synthetase family. As to quaternary structure, tetramer of two alpha and two beta subunits.

It localises to the cytoplasm. The enzyme catalyses tRNA(Gly) + glycine + ATP = glycyl-tRNA(Gly) + AMP + diphosphate. The chain is Glycine--tRNA ligase alpha subunit from Prochlorococcus marinus (strain MIT 9515).